Here is an 82-residue protein sequence, read N- to C-terminus: Large ribosomal subunit protein uL23 (82 aa).

Belongs to the universal ribosomal protein uL23 family. In terms of assembly, part of the 50S ribosomal subunit. Contacts protein L29.

Binds to 23S rRNA. One of the proteins that surrounds the polypeptide exit tunnel on the outside of the ribosome. This chain is Large ribosomal subunit protein uL23, found in Picrophilus torridus (strain ATCC 700027 / DSM 9790 / JCM 10055 / NBRC 100828 / KAW 2/3).